Reading from the N-terminus, the 223-residue chain is Kinetochore protein Spc25 (223 aa).

Positions 51–116 (RHQRKVGKLQ…QRKNEIMERI (66 aa)) form a coiled coil.

This sequence belongs to the SPC25 family. In terms of assembly, component of the Ndc80 complex, which is composed of Ndc80, Nuf2 and Spc25.

Its subcellular location is the nucleus. It localises to the chromosome. The protein resides in the centromere. It is found in the kinetochore. Acts as a component of the essential kinetochore-associated Ndc80 complex, which is required for chromosome segregation and spindle checkpoint activity during meiosis and mitosis. Required for kinetochore integrity and the organization of stable microtubule binding sites in the outer plate of the kinetochore. Participates in SAC signaling that responds specifically to disruptions in spindle microtubule dynamics. The NDC80 complex synergistically enhances the affinity of the SKA1 complex for microtubules and may allow the NDC80 complex to track depolymerizing microtubules. The protein is Kinetochore protein Spc25 of Drosophila yakuba (Fruit fly).